The following is a 365-amino-acid chain: Fucose-specific lectin (365 aa).

Positions 1-21 (MKLLHFTILLQVSLFPASSLA) are cleaved as a signal peptide. 6 tandem repeats follow at residues 22 to 79 (QAGG…NDTI), 80 to 141 (AKAR…NQYN), 142 to 206 (FQVA…RLAN), 207 to 261 (FGPA…VRTA), 262 to 309 (KPRT…DGAF), and 310 to 365 (EHSA…IPPA). The interval 22–365 (QAGGNNTEVQ…RRGILAIPPA (344 aa)) is 6 X approximate tandem repeats. N26 carries an N-linked (GlcNAc...) asparagine glycan. Beta-L-fucose contacts are provided by R51, E63, and W70. N76 and N85 each carry an N-linked (GlcNAc...) asparagine glycan. Position 111 (R111) interacts with beta-L-fucose. The N-linked (GlcNAc...) asparagine glycan is linked to N118. Residues E123, W132, R164, E176, W201, and R231 each coordinate beta-L-fucose. N248 is a glycosylation site (N-linked (GlcNAc...) asparagine). Positions 283, 333, and 347 each coordinate beta-L-fucose.

The protein belongs to the fungal fucose-specific lectin family. In terms of assembly, homodimer.

The protein resides in the secreted. Functionally, probable L-fucose-binding lectin. The protein is Fucose-specific lectin of Arthroderma benhamiae (strain ATCC MYA-4681 / CBS 112371) (Trichophyton mentagrophytes).